Reading from the N-terminus, the 61-residue chain is Large ribosomal subunit protein uL30 (61 aa).

It belongs to the universal ribosomal protein uL30 family. In terms of assembly, part of the 50S ribosomal subunit.

In Chlorobium phaeovibrioides (strain DSM 265 / 1930) (Prosthecochloris vibrioformis (strain DSM 265)), this protein is Large ribosomal subunit protein uL30.